The following is a 1374-amino-acid chain: Probable ATP-dependent RNA helicase spindle-E (1374 aa).

Residues 46 to 212 (LARIRENPVI…FKTPKKVGYL (167 aa)) form the Helicase ATP-binding domain. An ATP-binding site is contributed by 59-66 (GPTGCGKT). The DEAH box signature appears at 158-161 (DEIH). The Helicase C-terminal domain maps to 265-447 (VCDRLIENMH…NVILKAKLLE (183 aa)). Residues 866-931 (QFAVGQMVAA…RKLDGPLAYM (66 aa)) enclose the Tudor domain.

The protein belongs to the DEAD box helicase family. DEAH subfamily.

The protein resides in the cytoplasm. It catalyses the reaction ATP + H2O = ADP + phosphate + H(+). Functionally, probable ATP-binding RNA helicase which plays a central role during gametogenesis by repressing transposable elements and preventing their mobilization, which is essential for the germline integrity. Acts via the piRNA metabolic process, which mediates the repression of transposable elements during meiosis by forming complexes composed of piRNAs and Piwi proteins and govern the methylation and subsequent repression of transposons. This chain is Probable ATP-dependent RNA helicase spindle-E (spn-E), found in Aedes aegypti (Yellowfever mosquito).